Here is a 505-residue protein sequence, read N- to C-terminus: L-arabinose isomerase (505 aa).

Mn(2+)-binding residues include glutamate 308, glutamate 335, histidine 352, and histidine 453.

The protein belongs to the arabinose isomerase family. Mn(2+) serves as cofactor.

The enzyme catalyses beta-L-arabinopyranose = L-ribulose. It functions in the pathway carbohydrate degradation; L-arabinose degradation via L-ribulose; D-xylulose 5-phosphate from L-arabinose (bacterial route): step 1/3. In terms of biological role, catalyzes the conversion of L-arabinose to L-ribulose. This chain is L-arabinose isomerase, found in Bifidobacterium animalis subsp. lactis (strain AD011).